A 52-amino-acid chain; its full sequence is KACPRNCDTDIAYMVCPSSGERIIRKVCTNCCAAQKGCKLFRSNGSIKCTGT.

Intrachain disulfides connect cysteine 3–cysteine 32, cysteine 7–cysteine 28, cysteine 16–cysteine 38, and cysteine 31–cysteine 49.

In terms of biological role, potent inhibitor of trypsin and a weaker inhibitor of chymotrypsin. It does not inhibit elastase and subtilisin DY. This Capsicum annuum (Capsicum pepper) protein is Proteinase inhibitor PSI-1.2.